The primary structure comprises 205 residues: GTP cyclohydrolase-2 (205 aa).

49–53 (RLHSE) contacts GTP. Residues Cys-54, Cys-65, and Cys-67 each contribute to the Zn(2+) site. Residues Gln-70, 92 to 94 (EGR), and Thr-114 contribute to the GTP site. Asp-126 (proton acceptor) is an active-site residue. The Nucleophile role is filled by Arg-128. GTP-binding residues include Thr-149 and Lys-154.

This sequence belongs to the GTP cyclohydrolase II family. Requires Zn(2+) as cofactor.

It carries out the reaction GTP + 4 H2O = 2,5-diamino-6-hydroxy-4-(5-phosphoribosylamino)-pyrimidine + formate + 2 phosphate + 3 H(+). The protein operates within cofactor biosynthesis; riboflavin biosynthesis; 5-amino-6-(D-ribitylamino)uracil from GTP: step 1/4. Its function is as follows. Catalyzes the conversion of GTP to 2,5-diamino-6-ribosylamino-4(3H)-pyrimidinone 5'-phosphate (DARP), formate and pyrophosphate. The protein is GTP cyclohydrolase-2 of Pseudomonas putida (strain GB-1).